Here is a 317-residue protein sequence, read N- to C-terminus: L-lactate dehydrogenase (317 aa).

Residues Val-17, Asp-38, Lys-43, Tyr-68, and 82-83 contribute to the NAD(+) site; that span reads GV. Arg-91 is a binding site for substrate. NAD(+) is bound by residues Ser-104, 121–123, and Ser-146; that span reads VSN. 123-126 contributes to the substrate binding site; sequence NPVD. 151 to 154 provides a ligand contact to substrate; the sequence is DTSR. Residues Lys-156 and His-171 each contribute to the beta-D-fructose 1,6-bisphosphate site. Catalysis depends on His-178, which acts as the Proton acceptor. Position 224 is a phosphotyrosine (Tyr-224). A substrate-binding site is contributed by Thr-233.

Belongs to the LDH/MDH superfamily. LDH family. As to quaternary structure, homotetramer.

It is found in the cytoplasm. The catalysed reaction is (S)-lactate + NAD(+) = pyruvate + NADH + H(+). It functions in the pathway fermentation; pyruvate fermentation to lactate; (S)-lactate from pyruvate: step 1/1. Allosterically activated by fructose 1,6-bisphosphate (FBP). Catalyzes the conversion of lactate to pyruvate. The chain is L-lactate dehydrogenase from Clostridium perfringens (strain SM101 / Type A).